The following is a 160-amino-acid chain: Major pollen allergen Bet v 1-E (160 aa).

Brassinolide is bound by residues lysine 55, tyrosine 82, tyrosine 84, and asparagine 101.

Belongs to the BetVI family.

The protein localises to the cytoplasm. In terms of biological role, may be a general steroid carrier protein. The protein is Major pollen allergen Bet v 1-E (BETV1E) of Betula pendula (European white birch).